The sequence spans 293 residues: Cytidine deaminase (293 aa).

CMP/dCMP-type deaminase domains are found at residues 47–166 (EDRA…FGPA) and 186–293 (ESED…YQAV). 88-90 (NME) contributes to the substrate binding site. Histidine 101 contributes to the Zn(2+) binding site. Glutamate 103 functions as the Proton donor in the catalytic mechanism. Zn(2+) contacts are provided by cysteine 128 and cysteine 131.

The protein belongs to the cytidine and deoxycytidylate deaminase family. Homodimer. The cofactor is Zn(2+).

The catalysed reaction is cytidine + H2O + H(+) = uridine + NH4(+). It carries out the reaction 2'-deoxycytidine + H2O + H(+) = 2'-deoxyuridine + NH4(+). In terms of biological role, this enzyme scavenges exogenous and endogenous cytidine and 2'-deoxycytidine for UMP synthesis. The polypeptide is Cytidine deaminase (Aeromonas salmonicida (strain A449)).